Consider the following 574-residue polypeptide: Ankyrin repeat protein B18 (574 aa).

ANK repeat units follow at residues 56-87 (TGYTALHCYLYNNYFTNDVLKVLLNHGVDVTI), 135-164 (IKSRYMLLKEEDIDENIVSTLLDKGIDPNF), 167-213 (DGYT…NLNA), 217-249 (CGNTPFHLYLSIEMCNNIHMTKMLLTFNPNFEI), 253-285 (HGLTPILCYITSDYIQHDILVMLIHHYETNVGE), and 327-356 (EGKTLLHIACEYNNTHVIDYLIRINGDINA). The F-box domain occupies 541 to 574 (KCLLTLLPSEIIYEILYMLTIYDLYNISYPPTKV).

The sequence is that of Ankyrin repeat protein B18 from Variola virus (isolate Human/India/Ind3/1967) (VARV).